Reading from the N-terminus, the 76-residue chain is Small ribosomal subunit protein bS18 (76 aa).

This sequence belongs to the bacterial ribosomal protein bS18 family. Part of the 30S ribosomal subunit. Forms a tight heterodimer with protein bS6.

Functionally, binds as a heterodimer with protein bS6 to the central domain of the 16S rRNA, where it helps stabilize the platform of the 30S subunit. The chain is Small ribosomal subunit protein bS18 from Stenotrophomonas maltophilia (strain R551-3).